The primary structure comprises 131 residues: D-ribose pyranase (131 aa).

Catalysis depends on His20, which acts as the Proton donor. Residues Asp28, His98, and 120-122 (YAN) each bind substrate.

Belongs to the RbsD / FucU family. RbsD subfamily. Homodecamer.

Its subcellular location is the cytoplasm. The catalysed reaction is beta-D-ribopyranose = beta-D-ribofuranose. The protein operates within carbohydrate metabolism; D-ribose degradation; D-ribose 5-phosphate from beta-D-ribopyranose: step 1/2. In terms of biological role, catalyzes the interconversion of beta-pyran and beta-furan forms of D-ribose. The chain is D-ribose pyranase from Clostridium tetani (strain Massachusetts / E88).